The primary structure comprises 287 residues: Pentatricopeptide repeat-containing protein At4g18975, chloroplastic (287 aa).

The N-terminal 34 residues, 1–34, are a transit peptide targeting the chloroplast; sequence MALCNLNPTQGIFPLQGLSKSQEFICFSLLQSPR. PPR repeat units follow at residues 165–199 and 201–235; these read TMGT…HTRS and PRRL…KVSP.

The protein belongs to the PPR family. P subfamily.

The protein localises to the plastid. It is found in the chloroplast. In Arabidopsis thaliana (Mouse-ear cress), this protein is Pentatricopeptide repeat-containing protein At4g18975, chloroplastic.